The following is a 435-amino-acid chain: Serine--tRNA ligase (435 aa).

An L-serine-binding site is contributed by 234–236; the sequence is TAE. Residue 265–267 participates in ATP binding; sequence RRE. Position 288 (glutamate 288) interacts with L-serine. 352–355 serves as a coordination point for ATP; sequence EISS. Serine 388 is an L-serine binding site.

This sequence belongs to the class-II aminoacyl-tRNA synthetase family. Type-1 seryl-tRNA synthetase subfamily. Homodimer. The tRNA molecule binds across the dimer.

It is found in the cytoplasm. The enzyme catalyses tRNA(Ser) + L-serine + ATP = L-seryl-tRNA(Ser) + AMP + diphosphate + H(+). The catalysed reaction is tRNA(Sec) + L-serine + ATP = L-seryl-tRNA(Sec) + AMP + diphosphate + H(+). The protein operates within aminoacyl-tRNA biosynthesis; selenocysteinyl-tRNA(Sec) biosynthesis; L-seryl-tRNA(Sec) from L-serine and tRNA(Sec): step 1/1. Its function is as follows. Catalyzes the attachment of serine to tRNA(Ser). Is also able to aminoacylate tRNA(Sec) with serine, to form the misacylated tRNA L-seryl-tRNA(Sec), which will be further converted into selenocysteinyl-tRNA(Sec). The polypeptide is Serine--tRNA ligase (Synechococcus sp. (strain JA-3-3Ab) (Cyanobacteria bacterium Yellowstone A-Prime)).